The primary structure comprises 731 residues: Fatty acid oxidation complex subunit alpha (731 aa).

An enoyl-CoA hydratase region spans residues Thr-15–Pro-204. The interval Lys-320–Ser-729 is 3-hydroxyacyl-CoA dehydrogenase.

It in the N-terminal section; belongs to the enoyl-CoA hydratase/isomerase family. In the central section; belongs to the 3-hydroxyacyl-CoA dehydrogenase family. In terms of assembly, heterotetramer of two alpha chains (FadJ) and two beta chains (FadI).

Its subcellular location is the cytoplasm. The catalysed reaction is a (3S)-3-hydroxyacyl-CoA = a (2E)-enoyl-CoA + H2O. It carries out the reaction a 4-saturated-(3S)-3-hydroxyacyl-CoA = a (3E)-enoyl-CoA + H2O. The enzyme catalyses a (3S)-3-hydroxyacyl-CoA + NAD(+) = a 3-oxoacyl-CoA + NADH + H(+). It catalyses the reaction (3S)-3-hydroxybutanoyl-CoA = (3R)-3-hydroxybutanoyl-CoA. It functions in the pathway lipid metabolism; fatty acid beta-oxidation. Functionally, catalyzes the formation of a hydroxyacyl-CoA by addition of water on enoyl-CoA. Also exhibits 3-hydroxyacyl-CoA epimerase and 3-hydroxyacyl-CoA dehydrogenase activities. The sequence is that of Fatty acid oxidation complex subunit alpha from Pectobacterium atrosepticum (strain SCRI 1043 / ATCC BAA-672) (Erwinia carotovora subsp. atroseptica).